A 316-amino-acid chain; its full sequence is Mitochondrial distribution and morphology protein 12 (316 aa).

One can recognise an SMP-LTD domain in the interval 1-312; sequence MSIDLEWNGL…FPNFHTLVLG (312 aa).

Belongs to the MDM12 family. Component of the ER-mitochondria encounter structure (ERMES) or MDM complex, composed of MMM1, MDM10, MDM12 and MDM34. An MMM1 homodimer associates with one molecule of MDM12 on each side in a pairwise head-to-tail manner, and the SMP-LTD domains of MMM1 and MDM12 generate a continuous hydrophobic tunnel for phospholipid trafficking.

Its subcellular location is the mitochondrion outer membrane. The protein localises to the endoplasmic reticulum membrane. Functionally, component of the ERMES/MDM complex, which serves as a molecular tether to connect the endoplasmic reticulum (ER) and mitochondria. Components of this complex are involved in the control of mitochondrial shape and protein biogenesis, and function in nonvesicular lipid trafficking between the ER and mitochondria. MDM12 is required for the interaction of the ER-resident membrane protein MMM1 and the outer mitochondrial membrane-resident beta-barrel protein MDM10. The MDM12-MMM1 subcomplex functions in the major beta-barrel assembly pathway that is responsible for biogenesis of all mitochondrial outer membrane beta-barrel proteins, and acts in a late step after the SAM complex. The MDM10-MDM12-MMM1 subcomplex further acts in the TOM40-specific pathway after the action of the MDM12-MMM1 complex. Essential for establishing and maintaining the structure of mitochondria and maintenance of mtDNA nucleoids. The sequence is that of Mitochondrial distribution and morphology protein 12 from Postia placenta (strain ATCC 44394 / Madison 698-R) (Brown rot fungus).